Reading from the N-terminus, the 767-residue chain is Granule-bound starch synthase 2, chloroplastic/amyloplastic (767 aa).

The transit peptide at Met1 to Lys45 directs the protein to the chloroplast. 2 disordered regions span residues Lys160–Glu204 and Tyr226–Pro268. Low complexity predominate over residues Ser172 to Ser188. Residues Leu230–Asn245 are compositionally biased toward basic and acidic residues. The span at Ala253–Asn262 shows a compositional bias: acidic residues. Lys290 serves as a coordination point for ADP-alpha-D-glucose.

This sequence belongs to the glycosyltransferase 1 family. Bacterial/plant glycogen synthase subfamily.

Its subcellular location is the plastid. It is found in the chloroplast. It localises to the amyloplast. It catalyses the reaction [(1-&gt;4)-alpha-D-glucosyl](n) + ADP-alpha-D-glucose = [(1-&gt;4)-alpha-D-glucosyl](n+1) + ADP + H(+). The protein operates within glycan biosynthesis; starch biosynthesis. Its function is as follows. Accounts for only 10 to 15% of the total soluble starch synthase activity in tubers. This Solanum tuberosum (Potato) protein is Granule-bound starch synthase 2, chloroplastic/amyloplastic (SS2).